The sequence spans 539 residues: Protein TIC 55, chloroplastic (539 aa).

The N-terminal 50 residues, 1–50 (MAVPFLSSSLQLTPTSPILFTKVTPTPIIHNHRSTCTIPTKPRLRLLRRS), are a transit peptide targeting the chloroplast. An N-acetylalanine modification is found at Ala-51. Residues 51-482 (AVAGTAVSDQ…VIKSFELWKN (432 aa)) lie on the Stromal side of the membrane. In terms of domain architecture, Rieske spans 88-193 (WYPLYLTKNV…VKDSQGVVWV (106 aa)). [2Fe-2S] cluster contacts are provided by Cys-129, His-131, Cys-148, and His-151. Residues His-242 and His-247 each coordinate Fe cation. The Redox-active motif motif lies at 467 to 470 (CRSC). A helical transmembrane segment spans residues 483–500 (ILSATAVALTALAILVVS). Topologically, residues 501 to 504 (RQWK) are chloroplast intermembrane. A helical transmembrane segment spans residues 505–527 (AVLLGSAALCSAAAYTCLRAINL). The Stromal segment spans residues 528–539 (NTNNFIRTHRRL).

In terms of assembly, part of the Tic complex. Interacts with TIC62 and TIC110. The cofactor is [2Fe-2S] cluster. Highly expressed in green tissues and very low levels in non-photosynthetic tissues such as roots and etiolated seedlings.

Its subcellular location is the plastid. It is found in the chloroplast inner membrane. Involved in protein precursor import into chloroplasts. Part of the redox regulon consisting of TIC32, TIC 55 and TIC62. The polypeptide is Protein TIC 55, chloroplastic (TIC55) (Arabidopsis thaliana (Mouse-ear cress)).